A 556-amino-acid chain; its full sequence is CTP synthase (556 aa).

Positions 1–266 (MKYIFVTGGV…GKVVEDLLGL (266 aa)) are amidoligase domain. Ser12 provides a ligand contact to CTP. Ser12 contributes to the UTP binding site. 13 to 18 (SLGKGV) provides a ligand contact to ATP. Tyr53 contributes to the L-glutamine binding site. Asp70 contributes to the ATP binding site. Mg(2+) is bound by residues Asp70 and Glu140. CTP-binding positions include 147-149 (DIE), 187-192 (KTKPTQ), and Lys223. Residues 187–192 (KTKPTQ) and Lys223 each bind UTP. A Glutamine amidotransferase type-1 domain is found at 291 to 544 (TIAIAGKYTE…VKAALRGQSS (254 aa)). Gly356 is an L-glutamine binding site. Catalysis depends on Cys383, which acts as the Nucleophile; for glutamine hydrolysis. Residues 384 to 387 (LGMQ), Glu407, and Arg467 each bind L-glutamine. Active-site residues include His517 and Glu519.

It belongs to the CTP synthase family. Homotetramer.

The enzyme catalyses UTP + L-glutamine + ATP + H2O = CTP + L-glutamate + ADP + phosphate + 2 H(+). It carries out the reaction L-glutamine + H2O = L-glutamate + NH4(+). The catalysed reaction is UTP + NH4(+) + ATP = CTP + ADP + phosphate + 2 H(+). The protein operates within pyrimidine metabolism; CTP biosynthesis via de novo pathway; CTP from UDP: step 2/2. Allosterically activated by GTP, when glutamine is the substrate; GTP has no effect on the reaction when ammonia is the substrate. The allosteric effector GTP functions by stabilizing the protein conformation that binds the tetrahedral intermediate(s) formed during glutamine hydrolysis. Inhibited by the product CTP, via allosteric rather than competitive inhibition. Its function is as follows. Catalyzes the ATP-dependent amination of UTP to CTP with either L-glutamine or ammonia as the source of nitrogen. Regulates intracellular CTP levels through interactions with the four ribonucleotide triphosphates. The chain is CTP synthase from Deinococcus deserti (strain DSM 17065 / CIP 109153 / LMG 22923 / VCD115).